The primary structure comprises 295 residues: Pyridoxal 5'-phosphate synthase subunit PdxS (295 aa).

Asp-25 provides a ligand contact to D-ribose 5-phosphate. The active-site Schiff-base intermediate with D-ribose 5-phosphate is the Lys-82. Residue Gly-154 coordinates D-ribose 5-phosphate. D-glyceraldehyde 3-phosphate is bound at residue Arg-166. D-ribose 5-phosphate contacts are provided by residues Gly-215 and 236 to 237 (GS).

The protein belongs to the PdxS/SNZ family. As to quaternary structure, in the presence of PdxT, forms a dodecamer of heterodimers.

It carries out the reaction aldehydo-D-ribose 5-phosphate + D-glyceraldehyde 3-phosphate + L-glutamine = pyridoxal 5'-phosphate + L-glutamate + phosphate + 3 H2O + H(+). Its pathway is cofactor biosynthesis; pyridoxal 5'-phosphate biosynthesis. Its function is as follows. Catalyzes the formation of pyridoxal 5'-phosphate from ribose 5-phosphate (RBP), glyceraldehyde 3-phosphate (G3P) and ammonia. The ammonia is provided by the PdxT subunit. Can also use ribulose 5-phosphate and dihydroxyacetone phosphate as substrates, resulting from enzyme-catalyzed isomerization of RBP and G3P, respectively. The polypeptide is Pyridoxal 5'-phosphate synthase subunit PdxS (Bacillus cereus (strain Q1)).